Here is a 486-residue protein sequence, read N- to C-terminus: Palmitoleoyl-protein carboxylesterase notum2 (486 aa).

The first 18 residues, 1 to 18, serve as a signal peptide directing secretion; sequence MRILEIFAILLILKEVRP. Asn183 carries an N-linked (GlcNAc...) asparagine glycan. Catalysis depends on charge relay system residues Ser223, Asp331, and His380.

The protein belongs to the pectinacetylesterase family. Notum subfamily.

It is found in the secreted. It carries out the reaction [Wnt protein]-O-(9Z)-hexadecenoyl-L-serine + H2O = [Wnt protein]-L-serine + (9Z)-hexadecenoate + H(+). In terms of biological role, carboxylesterase that acts as a key negative regulator of the Wnt signaling pathway by specifically mediating depalmitoleoylation of WNT proteins. Serine palmitoleoylation of WNT proteins is required for efficient binding to frizzled receptors. The chain is Palmitoleoyl-protein carboxylesterase notum2 from Xenopus laevis (African clawed frog).